The sequence spans 150 residues: Deoxyuridine 5'-triphosphate nucleotidohydrolase (150 aa).

Residues 68–70 (RSG), N81, 85–87 (TID), and K95 contribute to the substrate site.

This sequence belongs to the dUTPase family. Mg(2+) is required as a cofactor.

It catalyses the reaction dUTP + H2O = dUMP + diphosphate + H(+). It participates in pyrimidine metabolism; dUMP biosynthesis; dUMP from dCTP (dUTP route): step 2/2. In terms of biological role, this enzyme is involved in nucleotide metabolism: it produces dUMP, the immediate precursor of thymidine nucleotides and it decreases the intracellular concentration of dUTP so that uracil cannot be incorporated into DNA. The polypeptide is Deoxyuridine 5'-triphosphate nucleotidohydrolase (Rickettsia bellii (strain OSU 85-389)).